Reading from the N-terminus, the 447-residue chain is MKRVVIAGTSSMVGKTTISTGIMKALSKKNNVQPYKIGPDYIDPTYHTEATKNKSRNLDSFFMDEMQVRSIFKRHSKNKDINVIEGVRGLYEGISPYNDVGSTASVSKTLNAPVILLMDARSLTRSAAAIIKGFKSFDTELNIKGVIFNKIRGEGHLNKLKEAVKYYDNDIEIIGAIPRDDGLSVSQRHLGLVPTPENKQKLLERIDLWGNTVEECLDIEKIVELSDESFDFEVDEKNKEETLWKVEKNNSKIAVAFDESFNFYYWDNFDALEENGAKIKFFSPLNDVEVPDCDTIYLGGGYPELFSEKLSNNKSMIDSIRNFDGKIYGECGGLMYLTNSIDGKEMLKLIDADAVMTPNVQGLSYVKGTFEKDCIIGEKSKEFKAHEFHYSKLININENDFSYRINRGKGIINSMDGITSKDGDIVGGYAHQHCIGNPYFAANLSKT.

In terms of domain architecture, GATase cobBQ-type spans lysine 252–tyrosine 439. Catalysis depends on cysteine 331, which acts as the Nucleophile.

The protein belongs to the CobB/CbiA family. Requires Mg(2+) as cofactor.

It catalyses the reaction cob(II)yrinate + 2 L-glutamine + 2 ATP + 2 H2O = cob(II)yrinate a,c diamide + 2 L-glutamate + 2 ADP + 2 phosphate + 2 H(+). The enzyme catalyses Ni-sirohydrochlorin + 2 L-glutamine + 2 ATP + 2 H2O = Ni-sirohydrochlorin a,c-diamide + 2 L-glutamate + 2 ADP + 2 phosphate + 2 H(+). It functions in the pathway cofactor biosynthesis; adenosylcobalamin biosynthesis; cob(II)yrinate a,c-diamide from sirohydrochlorin (anaerobic route): step 10/10. Its function is as follows. Catalyzes the ATP-dependent amidation of the two carboxylate groups at positions a and c of cobyrinate, using either L-glutamine or ammonia as the nitrogen source. Involved in the biosynthesis of the unique nickel-containing tetrapyrrole coenzyme F430, the prosthetic group of methyl-coenzyme M reductase (MCR), which plays a key role in methanogenesis and anaerobic methane oxidation. Catalyzes the ATP-dependent amidation of the two carboxylate groups at positions a and c of Ni-sirohydrochlorin, using L-glutamine or ammonia as the nitrogen source. The sequence is that of Cobyrinate a,c-diamide synthase from Methanococcus maripaludis (strain C5 / ATCC BAA-1333).